Here is a 251-residue protein sequence, read N- to C-terminus: Triosephosphate isomerase (251 aa).

9–11 contacts substrate; the sequence is NWK. The Electrophile role is filled by H95. E167 (proton acceptor) is an active-site residue. Residues G173, S213, and 234–235 contribute to the substrate site; that span reads GG. S213 carries the phosphoserine modification.

This sequence belongs to the triosephosphate isomerase family. Homodimer.

Its subcellular location is the cytoplasm. It catalyses the reaction D-glyceraldehyde 3-phosphate = dihydroxyacetone phosphate. The protein operates within carbohydrate biosynthesis; gluconeogenesis. It functions in the pathway carbohydrate degradation; glycolysis; D-glyceraldehyde 3-phosphate from glycerone phosphate: step 1/1. In terms of biological role, involved in the gluconeogenesis. Catalyzes stereospecifically the conversion of dihydroxyacetone phosphate (DHAP) to D-glyceraldehyde-3-phosphate (G3P). The sequence is that of Triosephosphate isomerase from Bacillus cereus (strain ATCC 10987 / NRS 248).